The chain runs to 1214 residues: Zinc finger E-box-binding homeobox 2 (1214 aa).

A disordered region spans residues 1–101 (MKQPIMADGP…GVEHPWHNNE (101 aa)). Basic residues predominate over residues 12-24 (CKRRKQANPRRKN). Polar residues predominate over residues 57–74 (DQETSPASVPNHESSPHV). The span at 89–98 (REGGVEHPWH) shows a compositional bias: basic and acidic residues. Ser-142 bears the Phosphoserine mark. 3 consecutive C2H2-type zinc fingers follow at residues 211–234 (LTCP…KYRH), 241–263 (FSCP…MVTH), and 282–304 (FKCT…LRIH). The C2H2-type 4; atypical zinc-finger motif lies at 310-334 (YECPNCKKRFSHSGSYSSHISSKKC). Phosphoserine is present on residues Ser-356, Ser-360, and Ser-364. Lys-377 carries the post-translational modification N6-acetyllysine. Lys-391 is covalently cross-linked (Glycyl lysine isopeptide (Lys-Gly) (interchain with G-Cter in SUMO); alternate). A Glycyl lysine isopeptide (Lys-Gly) (interchain with G-Cter in SUMO2); alternate cross-link involves residue Lys-391. Positions 437–487 (QHLGVGMEAPLLGFPTMNSNLSEVQKVLQIVDNTVSRQKMDCKAEEISKLK) are SMAD-MH2 binding domain. Residues Lys-479 and Lys-555 each participate in a glycyl lysine isopeptide (Lys-Gly) (interchain with G-Cter in SUMO2) cross-link. The C2H2-type 5; atypical zinc-finger motif lies at 581 to 605 (FSCQFCKESFPGPIPLHQHERYLCK). Residues Lys-611 and Lys-632 each participate in a glycyl lysine isopeptide (Lys-Gly) (interchain with G-Cter in SUMO2) cross-link. Residues 644-703 (GMTSPINPYKDHMSVLKAYYAMNMEPNSDELLKISIAVGLPQEFVKEWFEQRKVYQYSNS) constitute a DNA-binding region (homeobox; atypical). Phosphoserine is present on Ser-647. The segment covering 702-715 (NSRSPSLERSSKPL) has biased composition (low complexity). Disordered regions lie at residues 702–740 (NSRS…DSIT), 771–810 (PVEK…SSEE), and 832–857 (ATKN…ENSD). Lys-713 participates in a covalent cross-link: Glycyl lysine isopeptide (Lys-Gly) (interchain with G-Cter in SUMO2). Phosphoserine occurs at positions 731 and 780. Composition is skewed to low complexity over residues 780–808 (SNTP…SFSS) and 840–854 (SSIS…SSSE). Phosphothreonine is present on Thr-782. Ser-784 carries the post-translational modification Phosphoserine. Lys-866 is covalently cross-linked (Glycyl lysine isopeptide (Lys-Gly) (interchain with G-Cter in SUMO); alternate). Lys-866 participates in a covalent cross-link: Glycyl lysine isopeptide (Lys-Gly) (interchain with G-Cter in SUMO2); alternate. C2H2-type zinc fingers lie at residues 999-1021 (YACD…KYEH) and 1027-1049 (HQCQ…SRLH). A C2H2-type 8; atypical zinc finger spans residues 1055–1076 (YQCDKCGKRFSHSGSYSQHMNH). Positions 1117 to 1214 (TPQGYSDSEE…HEEDNMEDGM (98 aa)) are disordered. A phosphoserine mark is found at Ser-1122 and Ser-1124. Positions 1127 to 1155 (RESMPRDGESEKEHEKEGEDGYGKLGRQD) are enriched in basic and acidic residues. A compositionally biased stretch (acidic residues) spans 1156-1167 (GDEEFEEEEEES). Composition is skewed to basic and acidic residues over residues 1168-1179 (ENKSMDTDPETI) and 1186-1205 (GDHS…KSDH). The residue at position 1203 (Ser-1203) is a Phosphoserine.

The protein belongs to the delta-EF1/ZFH-1 C2H2-type zinc-finger family. As to quaternary structure, binds activated SMAD1, activated SMAD2 and activated SMAD3; binding with SMAD4 is not detected. Interacts with CBX4 and CTBP1. Sumoylation on Lys-391 and Lys-866 is promoted by the E3 SUMO-protein ligase CBX4, and impairs interaction with CTBP1 and transcription repression activity.

It localises to the nucleus. The protein localises to the chromosome. In terms of biological role, transcriptional inhibitor that binds to DNA sequence 5'-CACCT-3' in different promoters. Represses transcription of E-cadherin. Represses expression of MEOX2. This Homo sapiens (Human) protein is Zinc finger E-box-binding homeobox 2.